The chain runs to 324 residues: Glyoxylate/hydroxypyruvate reductase B (324 aa).

Catalysis depends on residues arginine 237 and glutamate 266. The active-site Proton donor is the histidine 285.

The protein belongs to the D-isomer specific 2-hydroxyacid dehydrogenase family. GhrB subfamily. As to quaternary structure, homodimer.

It localises to the cytoplasm. It catalyses the reaction glycolate + NADP(+) = glyoxylate + NADPH + H(+). It carries out the reaction (R)-glycerate + NAD(+) = 3-hydroxypyruvate + NADH + H(+). The catalysed reaction is (R)-glycerate + NADP(+) = 3-hydroxypyruvate + NADPH + H(+). Its function is as follows. Catalyzes the NADPH-dependent reduction of glyoxylate and hydroxypyruvate into glycolate and glycerate, respectively. This Enterobacter sp. (strain 638) protein is Glyoxylate/hydroxypyruvate reductase B.